The following is a 90-amino-acid chain: Acylphosphatase (90 aa).

Positions 5–90 (SFVVRVWGLV…PPKGSGFHTN (86 aa)) constitute an Acylphosphatase-like domain. Residues Arg-20 and Asn-38 contribute to the active site.

This sequence belongs to the acylphosphatase family.

It carries out the reaction an acyl phosphate + H2O = a carboxylate + phosphate + H(+). In Aeromonas hydrophila subsp. hydrophila (strain ATCC 7966 / DSM 30187 / BCRC 13018 / CCUG 14551 / JCM 1027 / KCTC 2358 / NCIMB 9240 / NCTC 8049), this protein is Acylphosphatase (acyP).